A 287-amino-acid polypeptide reads, in one-letter code: Protoheme IX farnesyltransferase (287 aa).

7 helical membrane-spanning segments follow: residues 19-39, 100-120, 134-154, 162-182, 212-232, 233-253, and 267-287; these read LMVAGATFFGAMLAVPHVTIT, MVLCLAGGLTSLLVGIGIVAV, FALLVGAAAGAMPPVVGWLAV, MLVVVYTLYLLWQIPHFWLHA, VWFHAYAVAVLMVPAFPLLEW, VGMRIMVTLCGIALLFAAMLA, and VLCAVMVVLLIDRLAIPVSLF.

It belongs to the UbiA prenyltransferase family. Protoheme IX farnesyltransferase subfamily.

It localises to the cell inner membrane. The catalysed reaction is heme b + (2E,6E)-farnesyl diphosphate + H2O = Fe(II)-heme o + diphosphate. The protein operates within porphyrin-containing compound metabolism; heme O biosynthesis; heme O from protoheme: step 1/1. In terms of biological role, converts heme B (protoheme IX) to heme O by substitution of the vinyl group on carbon 2 of heme B porphyrin ring with a hydroxyethyl farnesyl side group. This Nitratidesulfovibrio vulgaris (strain ATCC 29579 / DSM 644 / CCUG 34227 / NCIMB 8303 / VKM B-1760 / Hildenborough) (Desulfovibrio vulgaris) protein is Protoheme IX farnesyltransferase.